The following is a 361-amino-acid chain: Alternative oxidase, mitochondrial (361 aa).

Residues 156 to 178 (YLVRNVFLESVAGVPGMVAGMLR) traverse the membrane as a helical segment. Positions 164, 203, and 206 each coordinate Fe cation. The chain crosses the membrane as a helical span at residues 218-240 (WFMRLAVLGAQGVFFNAMFLSYL). The Fe cation site is built by E254, E309, and H312. Positions 318-328 (TLGNLDQNSDP) are enriched in polar residues. Residues 318–361 (TLGNLDQNSDPNPYASKYDNPNVPHPRKDIKYLKPSGWEREEVM) form a disordered region. Residues 343–361 (PRKDIKYLKPSGWEREEVM) show a composition bias toward basic and acidic residues.

This sequence belongs to the alternative oxidase family. It depends on Fe cation as a cofactor.

Its subcellular location is the mitochondrion inner membrane. Its function is as follows. Catalyzes cyanide-resistant oxygen consumption. May increase respiration when the cytochrome respiratory pathway is restricted, or in response to low temperatures. This Venturia inaequalis (Apple scab fungus) protein is Alternative oxidase, mitochondrial (AOX1).